The following is a 711-amino-acid chain: Polyribonucleotide nucleotidyltransferase (711 aa).

The Mg(2+) site is built by aspartate 487 and aspartate 493. A KH domain is found at 554-613; the sequence is PRIHTMKISAEKIKDVIGKGGAVIRALTEETGTTIEIEDDGTIKIAATEGAAAKEAIRRI. An S1 motif domain is found at 623 to 691; sequence GRIYTGKVAR…RQGRVRLSMK (69 aa). The interval 691 to 711 is disordered; sequence KEAVEKPAEEAAAEAPAAKEE.

Belongs to the polyribonucleotide nucleotidyltransferase family. Component of the RNA degradosome, which is a multiprotein complex involved in RNA processing and mRNA degradation. Requires Mg(2+) as cofactor.

The protein localises to the cytoplasm. It carries out the reaction RNA(n+1) + phosphate = RNA(n) + a ribonucleoside 5'-diphosphate. Its function is as follows. Involved in mRNA degradation. Catalyzes the phosphorolysis of single-stranded polyribonucleotides processively in the 3'- to 5'-direction. In Vibrio parahaemolyticus serotype O3:K6 (strain RIMD 2210633), this protein is Polyribonucleotide nucleotidyltransferase.